A 245-amino-acid polypeptide reads, in one-letter code: Ribonuclease 3 (245 aa).

The 130-residue stretch at 19–148 folds into the RNase III domain; the sequence is FKLFQEKIGI…FIGALYLDQG (130 aa). Glu61 is a Mg(2+) binding site. Asp65 is an active-site residue. Asp134 and Glu137 together coordinate Mg(2+). The active site involves Glu137. One can recognise a DRBM domain in the interval 174–243; it reads DYKSQLQELI…AAEALKKLKE (70 aa).

The protein belongs to the ribonuclease III family. In terms of assembly, homodimer. Requires Mg(2+) as cofactor.

The protein localises to the cytoplasm. It catalyses the reaction Endonucleolytic cleavage to 5'-phosphomonoester.. Functionally, digests double-stranded RNA. Involved in the processing of primary rRNA transcript to yield the immediate precursors to the large and small rRNAs (23S and 16S). Processes some mRNAs, and tRNAs when they are encoded in the rRNA operon. Processes pre-crRNA and tracrRNA of type II CRISPR loci if present in the organism. The chain is Ribonuclease 3 from Bacillus cereus (strain 03BB102).